We begin with the raw amino-acid sequence, 121 residues long: Large ribosomal subunit protein bL12 (121 aa).

The protein belongs to the bacterial ribosomal protein bL12 family. In terms of assembly, homodimer. Part of the ribosomal stalk of the 50S ribosomal subunit. Forms a multimeric L10(L12)X complex, where L10 forms an elongated spine to which 2 to 4 L12 dimers bind in a sequential fashion. Binds GTP-bound translation factors.

Its function is as follows. Forms part of the ribosomal stalk which helps the ribosome interact with GTP-bound translation factors. Is thus essential for accurate translation. The chain is Large ribosomal subunit protein bL12 from Pseudomonas savastanoi pv. phaseolicola (strain 1448A / Race 6) (Pseudomonas syringae pv. phaseolicola (strain 1448A / Race 6)).